The chain runs to 474 residues: Tubulin gamma-2 chain (474 aa).

A142 to G148 contributes to the GTP binding site.

This sequence belongs to the tubulin family. As to quaternary structure, gamma-tubulin complex is composed of gamma-tubulin and GCP proteins.

It is found in the cytoplasm. The protein localises to the cytoskeleton. Its subcellular location is the microtubule organizing center. The protein resides in the nucleus. It localises to the cell cortex. Its function is as follows. Tubulin is the major constituent of microtubules. The gamma chain is found at microtubule organizing centers (MTOC) such as the spindle poles, suggesting that it is involved in the minus-end nucleation of microtubule assembly. In terms of biological role, gamma-tubulin complex is essential for the control of microtubular network remodeling in the course of initiation and development of giant-feeding cells, and for the successful reproduction of nematodes (e.g. Meloidogyne spp.) in their plant hosts. This chain is Tubulin gamma-2 chain (TUBG2), found in Arabidopsis thaliana (Mouse-ear cress).